The following is a 531-amino-acid chain: Importin subunit alpha-2 (531 aa).

Over residues 1 to 10 (MTLTETSLSH) the composition is skewed to polar residues. The interval 1-88 (MTLTETSLSH…ISHQQSSTRL (88 aa)) is disordered. Positions 5-67 (ETSLSHNAEE…RNIVDVDEGG (63 aa)) constitute an IBB domain. 2 stretches are compositionally biased toward basic and acidic residues: residues 11–20 (NAEEGKDEGG) and 29–50 (TKHE…KQKG). A compositionally biased stretch (acidic residues) spans 62–75 (DVDEGGNSESELEE). 7 ARM repeats span residues 122-161 (NPPI…NIVS), 164-203 (TEQT…NIAG), 250-290 (KNPH…YLTD), 293-331 (DEQI…NVAT), 334-374 (DSLT…NIIA), 377-416 (QKQI…NLAQ), and 420-459 (NRQV…TLML). The segment at 511-531 (DDAGEKESHENADPQDNKWSF) is disordered. A compositionally biased stretch (basic and acidic residues) spans 515–531 (EKESHENADPQDNKWSF).

Belongs to the importin alpha family. Forms a complex with an importin beta subunit. Interacts with akir-1. Germline tissues. Expressed exclusively in germ line cells from the early embryonic through adult stages.

Its subcellular location is the cytoplasm. It is found in the nucleus. The protein localises to the nucleus envelope. Its function is as follows. Nuclear transport receptor that mediates nuclear import of proteins, and which is involved in sister chromatid cohesion. Binds specifically and directly to substrates containing either a simple or bipartite nuclear localization signals (NLS) motif. Promotes docking of import substrates to the nuclear envelope. Together with akir-1 adapter, required for the import and load of cohesin complex proteins in meiotic nuclei. The polypeptide is Importin subunit alpha-2 (Caenorhabditis elegans).